Reading from the N-terminus, the 35-residue chain is PTEN upstream open reading frame MP31 (35 aa).

Interacts with lactate dehydrogenases LDHA and LDHB; interaction with mitochondrial LDH leads to inhibition of lactate dehydrogenase activity, preventing conversion of lactate to pyruvate. In terms of tissue distribution, detected in brain, kidney and liver (at protein level).

It is found in the mitochondrion. Functionally, inhibits lactate dehydrogenase (LDH)-mediated conversion of lactate to pyruvate in mitochondria by competing with mitochondrial LDH for binding to NAD(+). Also inhibits cellular lactate utilization. The chain is PTEN upstream open reading frame MP31 from Mus musculus (Mouse).